Consider the following 123-residue polypeptide: Ferredoxin-5 (123 aa).

The 118-residue stretch at 2–119 (PNITFTSPIM…DVMVHFTGTP (118 aa)) folds into the 2Fe-2S ferredoxin-type domain. C42, C47, C50, and C102 together coordinate [2Fe-2S] cluster.

Belongs to the 2Fe2S plant-type ferredoxin family. [2Fe-2S] cluster serves as cofactor.

In terms of biological role, ferredoxins are iron-sulfur proteins that transfer electrons in a wide variety of metabolic reactions. This ferredoxin probably participates in nitrogen fixation. The chain is Ferredoxin-5 (fdxD) from Rhodobacter capsulatus (Rhodopseudomonas capsulata).